A 116-amino-acid chain; its full sequence is Dynein light chain Tctex-type 3 (116 aa).

Residue Tyr-4 is modified to 3'-nitrotyrosine.

The protein belongs to the dynein light chain Tctex-type family. As to quaternary structure, homodimer. The cytoplasmic dynein 1 complex consists of two catalytic heavy chains (HCs) and a number of non-catalytic subunits presented by intermediate chains (ICs), light intermediate chains (LICs) and light chains (LCs); the composition seems to vary in respect to the IC, LIC and LC composition. The heavy chain homodimer serves as a scaffold for the probable homodimeric assembly of the respective non-catalytic subunits. The ICs and LICs bind directly to the HC dimer and the LCs assemble on the IC dimer. DYNLT1 and DYNLT3 compete for association with dynein IC (DYNC1I1 or DYNC1I2). Self-associates. Interacts with DYNC1I1 and DYNC1I2. Interacts with BUB3. Interacts with SATB1 in nucleus to form complex with matrix attachment regions (MARs) of DNA.

The protein localises to the nucleus. It localises to the cytoplasm. Its subcellular location is the cytoskeleton. It is found in the chromosome. The protein resides in the centromere. The protein localises to the kinetochore. Acts as one of several non-catalytic accessory components of the cytoplasmic dynein 1 complex that are thought to be involved in linking dynein to cargos and to adapter proteins that regulate dynein function. Cytoplasmic dynein 1 acts as a motor for the intracellular retrograde motility of vesicles and organelles along microtubules. Probably binds BUB3 as part of transport cargo. Required for the efficient progression through mitosis. This Ovis aries (Sheep) protein is Dynein light chain Tctex-type 3 (DYNLT3).